The following is a 376-amino-acid chain: Mitochondrial distribution and morphology protein 34 (376 aa).

The SMP-LTD domain occupies 1 to 194; the sequence is MSFTFNWPRF…LPGIIHRLSQ (194 aa). Disordered regions lie at residues 207-249 and 286-376; these read SKHP…PKIV and SVPP…LHPS. Over residues 218–230 the composition is skewed to acidic residues; the sequence is EISEPGDYGEEGE. Residues 306–318 show a composition bias toward basic residues; that stretch reads VKAKRKRTYRLGG. The span at 350–362 shows a compositional bias: basic and acidic residues; that stretch reads MDRYFRSYDDHSR.

The protein belongs to the MDM34 family. As to quaternary structure, component of the ER-mitochondria encounter structure (ERMES) or MDM complex, composed of MMM1, MDM10, MDM12 and MDM34.

It localises to the mitochondrion outer membrane. Its function is as follows. Component of the ERMES/MDM complex, which serves as a molecular tether to connect the endoplasmic reticulum (ER) and mitochondria. Components of this complex are involved in the control of mitochondrial shape and protein biogenesis, and function in nonvesicular lipid trafficking between the ER and mitochondria. MDM34 is required for the interaction of the ER-resident membrane protein MMM1 and the outer mitochondrial membrane-resident beta-barrel protein MDM10. The protein is Mitochondrial distribution and morphology protein 34 of Laccaria bicolor (strain S238N-H82 / ATCC MYA-4686) (Bicoloured deceiver).